Here is an 86-residue protein sequence, read N- to C-terminus: Small ribosomal subunit protein uS17 (86 aa).

It belongs to the universal ribosomal protein uS17 family. Part of the 30S ribosomal subunit.

In terms of biological role, one of the primary rRNA binding proteins, it binds specifically to the 5'-end of 16S ribosomal RNA. The protein is Small ribosomal subunit protein uS17 of Roseiflexus sp. (strain RS-1).